A 222-amino-acid polypeptide reads, in one-letter code: Triosephosphate isomerase (222 aa).

Asn9 to Lys11 serves as a coordination point for substrate. The active-site Electrophile is the His93. Glu141 (proton acceptor) is an active-site residue. Substrate-binding positions include Ile146, Gly181, and Ala202–Ser203.

This sequence belongs to the triosephosphate isomerase family. Homotetramer; dimer of dimers.

Its subcellular location is the cytoplasm. It carries out the reaction D-glyceraldehyde 3-phosphate = dihydroxyacetone phosphate. It participates in carbohydrate biosynthesis; gluconeogenesis. Its pathway is carbohydrate degradation; glycolysis; D-glyceraldehyde 3-phosphate from glycerone phosphate: step 1/1. Involved in the gluconeogenesis. Catalyzes stereospecifically the conversion of dihydroxyacetone phosphate (DHAP) to D-glyceraldehyde-3-phosphate (G3P). This Methanosarcina barkeri (strain Fusaro / DSM 804) protein is Triosephosphate isomerase.